The sequence spans 211 residues: Cell division protein SepF (211 aa).

Acidic residues predominate over residues 15-26; the sequence is DTDEVNEVEEEV. The interval 15–111 is disordered; that stretch reads DTDEVNEVEE…ETYQAQTTVQ (97 aa). Composition is skewed to polar residues over residues 44-57, 64-81, and 91-111; these read IPSQQTSRQSQNPA, ARSQQTESDSLPTYPNRQ, and RESVTASTARRETYQAQTTVQ.

This sequence belongs to the SepF family. As to quaternary structure, homodimer. Interacts with FtsZ.

The protein resides in the cytoplasm. Functionally, cell division protein that is part of the divisome complex and is recruited early to the Z-ring. Probably stimulates Z-ring formation, perhaps through the cross-linking of FtsZ protofilaments. Its function overlaps with FtsA. In Streptococcus uberis (strain ATCC BAA-854 / 0140J), this protein is Cell division protein SepF.